A 310-amino-acid polypeptide reads, in one-letter code: Malate dehydrogenase (310 aa).

Residues 7 to 12 and D32 contribute to the NAD(+) site; that span reads GAGNVG. 2 residues coordinate substrate: R81 and R87. NAD(+) is bound by residues N94 and 117–119; that span reads VSN. Residues N119 and R150 each coordinate substrate. The active-site Proton acceptor is H174.

Belongs to the LDH/MDH superfamily. MDH type 3 family.

The enzyme catalyses (S)-malate + NAD(+) = oxaloacetate + NADH + H(+). In terms of biological role, catalyzes the reversible oxidation of malate to oxaloacetate. The sequence is that of Malate dehydrogenase from Chlorobium luteolum (strain DSM 273 / BCRC 81028 / 2530) (Pelodictyon luteolum).